The primary structure comprises 1187 residues: Trafficking protein particle complex II-specific subunit 120 homolog (1187 aa).

Positions 1037-1059 (GTTAKTDSSKEPGDGSSRSADES) are disordered.

The protein belongs to the TRS120 family. Part of the multisubunit TRAPP (transport protein particle) II complex composed of BET3, BET5, TRS20, TRS23, TRS31, TRS33, TRS65, TRS85, TRS120 and TRS130.

The protein resides in the golgi apparatus. Its subcellular location is the trans-Golgi network. It localises to the early endosome. Specific subunit of the TRAPP II complex, a highly conserved vesicle tethering complex that is required for the proper transport of proteins in post-Golgi trafficking pathways to the growing cell plate in mitotic active cells. The chain is Trafficking protein particle complex II-specific subunit 120 homolog from Oryza sativa subsp. japonica (Rice).